A 321-amino-acid polypeptide reads, in one-letter code: Ferredoxin--NADP reductase (321 aa).

Residues Asp34, Gln42, Tyr47, Val87, Phe119, Asp278, and Thr319 each coordinate FAD.

Belongs to the ferredoxin--NADP reductase type 2 family. In terms of assembly, homodimer. The cofactor is FAD.

The catalysed reaction is 2 reduced [2Fe-2S]-[ferredoxin] + NADP(+) + H(+) = 2 oxidized [2Fe-2S]-[ferredoxin] + NADPH. The chain is Ferredoxin--NADP reductase from Streptococcus pneumoniae serotype 4 (strain ATCC BAA-334 / TIGR4).